The chain runs to 106 residues: UPF0145 protein BF0270 (106 aa).

Belongs to the UPF0145 family.

The chain is UPF0145 protein BF0270 from Bacteroides fragilis (strain YCH46).